Consider the following 57-residue polypeptide: Andropin (57 aa).

A signal peptide spans methionine 1–alanine 23.

The protein belongs to the andropin family. Ejaculatory duct of adult males.

It is found in the secreted. In terms of biological role, male-specific peptide with moderate activity against Gram-positive bacteria. This is Andropin (Anp) from Drosophila melanogaster (Fruit fly).